Reading from the N-terminus, the 334-residue chain is MLVLGIESSCDDTAAAVWDDGTVRSNVVSSQADLHEEYGGVVPELASRNHQRLIVPVVQRALAEADADARALDAIAGTYGPGLPGSLLVGLSFAKALAQGLDVPLIGVNHLEGHVYSVDLGPERPARPFLCLIVSGGHTELVHVGDDFQHDVLGRTRDDAAGEAFDKMAQLFGLGYPGGPDIDRHAESGAPTFHDFPRSRLDDFDFSFSGLKTSVLYYLRDRSDADRERLLDEHLDDLCASVRAAVVDVLVDAVRRAVEATGVGHVAVVGGVAANSALRRRMKALGDDEGVDVSVPDLAYCMDNAAMIAQAGARRLAAGHASPPTLDVHPSLQL.

Positions 110 and 114 each coordinate Fe cation. Substrate contacts are provided by residues 133 to 137 (IVSGG), aspartate 166, glycine 179, aspartate 183, and asparagine 275. Fe cation is bound at residue aspartate 303.

Belongs to the KAE1 / TsaD family. Requires Fe(2+) as cofactor.

The protein localises to the cytoplasm. The enzyme catalyses L-threonylcarbamoyladenylate + adenosine(37) in tRNA = N(6)-L-threonylcarbamoyladenosine(37) in tRNA + AMP + H(+). Functionally, required for the formation of a threonylcarbamoyl group on adenosine at position 37 (t(6)A37) in tRNAs that read codons beginning with adenine. Is involved in the transfer of the threonylcarbamoyl moiety of threonylcarbamoyl-AMP (TC-AMP) to the N6 group of A37, together with TsaE and TsaB. TsaD likely plays a direct catalytic role in this reaction. The protein is tRNA N6-adenosine threonylcarbamoyltransferase of Salinibacter ruber (strain DSM 13855 / M31).